Reading from the N-terminus, the 263-residue chain is 3'-5' ssDNA/RNA exonuclease TatD (263 aa).

E91, H127, and H152 together coordinate a divalent metal cation.

Belongs to the metallo-dependent hydrolases superfamily. TatD-type hydrolase family. TatD subfamily. Monomer. Mg(2+) serves as cofactor.

It is found in the cytoplasm. Its function is as follows. 3'-5' exonuclease that prefers single-stranded DNA and RNA. May play a role in the H(2)O(2)-induced DNA damage repair. The protein is 3'-5' ssDNA/RNA exonuclease TatD of Cronobacter turicensis (strain DSM 18703 / CCUG 55852 / LMG 23827 / z3032).